Here is a 346-residue protein sequence, read N- to C-terminus: UDP-N-acetylenolpyruvoylglucosamine reductase (346 aa).

The FAD-binding PCMH-type domain occupies 18–189 (LHAQARAFIA…VSVVFALKTH (172 aa)). The active site involves Arg-165. The Proton donor role is filled by Ser-240. Glu-336 is a catalytic residue.

It belongs to the MurB family. The cofactor is FAD.

It is found in the cytoplasm. It catalyses the reaction UDP-N-acetyl-alpha-D-muramate + NADP(+) = UDP-N-acetyl-3-O-(1-carboxyvinyl)-alpha-D-glucosamine + NADPH + H(+). The protein operates within cell wall biogenesis; peptidoglycan biosynthesis. Cell wall formation. This chain is UDP-N-acetylenolpyruvoylglucosamine reductase, found in Neisseria gonorrhoeae (strain ATCC 700825 / FA 1090).